Reading from the N-terminus, the 285-residue chain is UPF0354 protein MW1686 (285 aa).

Belongs to the UPF0354 family.

The protein is UPF0354 protein MW1686 of Staphylococcus aureus (strain MW2).